A 127-amino-acid chain; its full sequence is Small ribosomal subunit protein uS13 (127 aa).

The interval 95–127 (GLPLRGQRTKTNARTRRGKKGAAIGGKKKATKK) is disordered.

Belongs to the universal ribosomal protein uS13 family. In terms of assembly, part of the 30S ribosomal subunit. Forms a loose heterodimer with protein S19. Forms two bridges to the 50S subunit in the 70S ribosome.

In terms of biological role, located at the top of the head of the 30S subunit, it contacts several helices of the 16S rRNA. In the 70S ribosome it contacts the 23S rRNA (bridge B1a) and protein L5 of the 50S subunit (bridge B1b), connecting the 2 subunits; these bridges are implicated in subunit movement. Contacts the tRNAs in the A and P-sites. The chain is Small ribosomal subunit protein uS13 from Herpetosiphon aurantiacus (strain ATCC 23779 / DSM 785 / 114-95).